Reading from the N-terminus, the 406-residue chain is Argininosuccinate synthase (406 aa).

ATP is bound by residues 11–19 (AYSGGLDTS) and A38. L-citrulline is bound by residues Y91 and S96. Residue G121 participates in ATP binding. Residues T123, N127, and D128 each coordinate L-aspartate. N127 lines the L-citrulline pocket. L-citrulline contacts are provided by R131, S181, S190, E266, and Y278.

The protein belongs to the argininosuccinate synthase family. Type 1 subfamily. In terms of assembly, homotetramer.

The protein localises to the cytoplasm. It carries out the reaction L-citrulline + L-aspartate + ATP = 2-(N(omega)-L-arginino)succinate + AMP + diphosphate + H(+). It functions in the pathway amino-acid biosynthesis; L-arginine biosynthesis; L-arginine from L-ornithine and carbamoyl phosphate: step 2/3. In Campylobacter jejuni subsp. jejuni serotype O:2 (strain ATCC 700819 / NCTC 11168), this protein is Argininosuccinate synthase.